The following is a 250-amino-acid chain: 3-deoxy-manno-octulosonate cytidylyltransferase 1 (250 aa).

The protein belongs to the KdsB family.

The protein resides in the cytoplasm. It catalyses the reaction 3-deoxy-alpha-D-manno-oct-2-ulosonate + CTP = CMP-3-deoxy-beta-D-manno-octulosonate + diphosphate. Its pathway is nucleotide-sugar biosynthesis; CMP-3-deoxy-D-manno-octulosonate biosynthesis; CMP-3-deoxy-D-manno-octulosonate from 3-deoxy-D-manno-octulosonate and CTP: step 1/1. It participates in bacterial outer membrane biogenesis; lipopolysaccharide biosynthesis. Its function is as follows. Activates KDO (a required 8-carbon sugar) for incorporation into bacterial lipopolysaccharide in Gram-negative bacteria. The polypeptide is 3-deoxy-manno-octulosonate cytidylyltransferase 1 (Actinobacillus pleuropneumoniae serotype 5b (strain L20)).